We begin with the raw amino-acid sequence, 493 residues long: Putative lon protease homolog (493 aa).

52 to 59 (GPPGVGKS) provides a ligand contact to ATP.

The protein belongs to the peptidase S16 family.

The sequence is that of Putative lon protease homolog from Thermoplasma acidophilum (strain ATCC 25905 / DSM 1728 / JCM 9062 / NBRC 15155 / AMRC-C165).